A 424-amino-acid polypeptide reads, in one-letter code: Serine--tRNA ligase (424 aa).

Residue 230 to 232 (TAE) participates in L-serine binding. Residue 261-263 (RSE) coordinates ATP. Glutamate 284 contacts L-serine. 348–351 (EISS) provides a ligand contact to ATP. Serine 384 contributes to the L-serine binding site.

Belongs to the class-II aminoacyl-tRNA synthetase family. Type-1 seryl-tRNA synthetase subfamily. In terms of assembly, homodimer. The tRNA molecule binds across the dimer.

The protein localises to the cytoplasm. The enzyme catalyses tRNA(Ser) + L-serine + ATP = L-seryl-tRNA(Ser) + AMP + diphosphate + H(+). The catalysed reaction is tRNA(Sec) + L-serine + ATP = L-seryl-tRNA(Sec) + AMP + diphosphate + H(+). Its pathway is aminoacyl-tRNA biosynthesis; selenocysteinyl-tRNA(Sec) biosynthesis; L-seryl-tRNA(Sec) from L-serine and tRNA(Sec): step 1/1. Its function is as follows. Catalyzes the attachment of serine to tRNA(Ser). Is also able to aminoacylate tRNA(Sec) with serine, to form the misacylated tRNA L-seryl-tRNA(Sec), which will be further converted into selenocysteinyl-tRNA(Sec). The sequence is that of Serine--tRNA ligase from Nitratidesulfovibrio vulgaris (strain ATCC 29579 / DSM 644 / CCUG 34227 / NCIMB 8303 / VKM B-1760 / Hildenborough) (Desulfovibrio vulgaris).